Reading from the N-terminus, the 252-residue chain is Phosphate import ATP-binding protein PstB 1 (252 aa).

Residues 6–247 enclose the ABC transporter domain; sequence LQVSDLSVYY…PQHKETEDYI (242 aa). Residue 38 to 45 participates in ATP binding; that stretch reads GPSGSGKS.

Belongs to the ABC transporter superfamily. Phosphate importer (TC 3.A.1.7) family. The complex is composed of two ATP-binding proteins (PstB), two transmembrane proteins (PstC and PstA) and a solute-binding protein (PstS).

It is found in the cell membrane. It carries out the reaction phosphate(out) + ATP + H2O = ADP + 2 phosphate(in) + H(+). Functionally, part of the ABC transporter complex PstSACB involved in phosphate import. Responsible for energy coupling to the transport system. The chain is Phosphate import ATP-binding protein PstB 1 from Streptococcus pneumoniae (strain ATCC BAA-255 / R6).